Reading from the N-terminus, the 703-residue chain is Elongation factor G 2 (703 aa).

One can recognise a tr-type G domain in the interval Glu8 to Ser291. GTP-binding positions include Ala17–Thr24, Asp89–His93, and Asn143–Asp146.

This sequence belongs to the TRAFAC class translation factor GTPase superfamily. Classic translation factor GTPase family. EF-G/EF-2 subfamily.

The protein resides in the cytoplasm. Functionally, catalyzes the GTP-dependent ribosomal translocation step during translation elongation. During this step, the ribosome changes from the pre-translocational (PRE) to the post-translocational (POST) state as the newly formed A-site-bound peptidyl-tRNA and P-site-bound deacylated tRNA move to the P and E sites, respectively. Catalyzes the coordinated movement of the two tRNA molecules, the mRNA and conformational changes in the ribosome. This is Elongation factor G 2 (fusB) from Pseudomonas putida (strain ATCC 47054 / DSM 6125 / CFBP 8728 / NCIMB 11950 / KT2440).